A 98-amino-acid polypeptide reads, in one-letter code: Putative pterin-4-alpha-carbinolamine dehydratase (98 aa).

Belongs to the pterin-4-alpha-carbinolamine dehydratase family.

The enzyme catalyses (4aS,6R)-4a-hydroxy-L-erythro-5,6,7,8-tetrahydrobiopterin = (6R)-L-erythro-6,7-dihydrobiopterin + H2O. The sequence is that of Putative pterin-4-alpha-carbinolamine dehydratase from Roseobacter denitrificans (strain ATCC 33942 / OCh 114) (Erythrobacter sp. (strain OCh 114)).